A 116-amino-acid chain; its full sequence is Large ribosomal subunit protein uL18 (116 aa).

The protein belongs to the universal ribosomal protein uL18 family. Part of the 50S ribosomal subunit; part of the 5S rRNA/L5/L18/L25 subcomplex. Contacts the 5S and 23S rRNAs.

Functionally, this is one of the proteins that bind and probably mediate the attachment of the 5S RNA into the large ribosomal subunit, where it forms part of the central protuberance. The sequence is that of Large ribosomal subunit protein uL18 from Shewanella piezotolerans (strain WP3 / JCM 13877).